Reading from the N-terminus, the 398-residue chain is Small ribosomal subunit protein mS29 (398 aa).

The N-terminal 21 residues, 1–21 (MMLKGITRLISRIHKLDPGRF), are a transit peptide targeting the mitochondrion. Residues 39-67 (QVPVESPRAISRTNENDPAKHGDQHEGQH) form a disordered region. The segment covering 52 to 66 (NENDPAKHGDQHEGQ) has biased composition (basic and acidic residues). GTP-binding positions include M100 and 128 to 135 (GEKGTGKT). N6-acetyllysine is present on residues K175 and K207.

The protein belongs to the mitochondrion-specific ribosomal protein mS29 family. As to quaternary structure, component of the mitochondrial small ribosomal subunit (mt-SSU). Mature mammalian 55S mitochondrial ribosomes consist of a small (28S) and a large (39S) subunit. The 28S small subunit contains a 12S ribosomal RNA (12S mt-rRNA) and 30 different proteins. The 39S large subunit contains a 16S rRNA (16S mt-rRNA), a copy of mitochondrial valine transfer RNA (mt-tRNA(Val)), which plays an integral structural role, and 52 different proteins. Interacts with DELE1. Interacts with NOA1. Ubiquitous.

The protein resides in the mitochondrion. It catalyses the reaction GTP + H2O = GDP + phosphate + H(+). As a component of the mitochondrial small ribosomal subunit, it plays a role in the translation of mitochondrial mRNAs. Involved in mediating interferon-gamma-induced cell death. Displays GTPase activity in vitro. The protein is Small ribosomal subunit protein mS29 of Homo sapiens (Human).